The sequence spans 359 residues: Peptide chain release factor 1 (359 aa).

At glutamine 236 the chain carries N5-methylglutamine. The interval 288-307 (QDEQDAERKSTIGTGDRSER) is disordered. Residues 293-307 (AERKSTIGTGDRSER) are compositionally biased toward basic and acidic residues.

This sequence belongs to the prokaryotic/mitochondrial release factor family. In terms of processing, methylated by PrmC. Methylation increases the termination efficiency of RF1.

It localises to the cytoplasm. Peptide chain release factor 1 directs the termination of translation in response to the peptide chain termination codons UAG and UAA. This chain is Peptide chain release factor 1 (prfA), found in Streptococcus gordonii (strain Challis / ATCC 35105 / BCRC 15272 / CH1 / DL1 / V288).